A 241-amino-acid chain; its full sequence is Probable transcriptional regulatory protein lin1570 (241 aa).

The span at 1 to 14 shows a compositional bias: polar residues; sequence MAGHSKWNNIQGRK. Positions 1–22 are disordered; it reads MAGHSKWNNIQGRKNAQDSKRS.

This sequence belongs to the TACO1 family.

The protein localises to the cytoplasm. The protein is Probable transcriptional regulatory protein lin1570 of Listeria innocua serovar 6a (strain ATCC BAA-680 / CLIP 11262).